The chain runs to 100 residues: MARKSLIQREKKRQKLEQKYHLIRRSSKKEISKVPSLSDKWEIHGKLQSPPRNSAPTRLHRRCFLTGRPRANYRDFGLSGHILRAKVHACLLPGATRSSW.

The protein belongs to the universal ribosomal protein uS14 family. As to quaternary structure, part of the 30S ribosomal subunit.

It localises to the plastid. Its subcellular location is the chloroplast. In terms of biological role, binds 16S rRNA, required for the assembly of 30S particles. The chain is Small ribosomal subunit protein uS14c from Populus alba (White poplar).